The sequence spans 797 residues: Kinesin-like protein Klp68D (797 aa).

The Kinesin motor domain maps to 19-344 (CVQVVVRCRP…LRYASRAKSI (326 aa)). An ATP-binding site is contributed by 106–113 (GQTGTGKT). Residues 350–384 (KNEDPQDAKLKEYQEEIERLKRLIAPQQQQRSEKQ) adopt a coiled-coil conformation. Disordered regions lie at residues 371-450 (RLIA…ELER), 610-656 (SSFP…PSSL), and 722-797 (ANSS…LVNK). Basic residues predominate over residues 386–396 (TIKKQRVKKPK). Acidic residues predominate over residues 417-431 (QVDEDRDSDGDGAES). Residues 432-450 (ESDKENEAEVAKSNEELER) are compositionally biased toward basic and acidic residues. A coiled-coil region spans residues 432-580 (ESDKENEAEV…LVKELKRQLL (149 aa)). Positions 626–638 (GYRRPVSHPQRRR) are enriched in basic residues. Residues 782 to 791 (KKPASAYPKA) show a composition bias toward low complexity.

The protein belongs to the TRAFAC class myosin-kinesin ATPase superfamily. Kinesin family. Kinesin II subfamily.

It localises to the cytoplasm. The protein resides in the cytoskeleton. In terms of biological role, plus-end directed microtubule motor that may be used for anterograde axonal transport and could conceivably move cargos in fly neurons different than those moved by kinesin heavy chain or other plus-end directed motors. The sequence is that of Kinesin-like protein Klp68D from Drosophila pseudoobscura pseudoobscura (Fruit fly).